The following is a 477-amino-acid chain: Ribulose bisphosphate carboxylase large chain (477 aa).

Positions 1-2 (MS) are excised as a propeptide. Proline 3 is subject to N-acetylproline. Lysine 14 carries the N6,N6,N6-trimethyllysine modification. Substrate-binding residues include asparagine 123 and threonine 173. Lysine 175 functions as the Proton acceptor in the catalytic mechanism. Position 177 (lysine 177) interacts with substrate. Mg(2+)-binding residues include lysine 201, aspartate 203, and glutamate 204. Lysine 201 bears the N6-carboxylysine mark. The Proton acceptor role is filled by histidine 294. Positions 295, 327, and 379 each coordinate substrate.

It belongs to the RuBisCO large chain family. Type I subfamily. Heterohexadecamer of 8 large chains and 8 small chains; disulfide-linked. The disulfide link is formed within the large subunit homodimers. The cofactor is Mg(2+). Post-translationally, the disulfide bond which can form in the large chain dimeric partners within the hexadecamer appears to be associated with oxidative stress and protein turnover.

Its subcellular location is the plastid. The protein resides in the chloroplast. The enzyme catalyses 2 (2R)-3-phosphoglycerate + 2 H(+) = D-ribulose 1,5-bisphosphate + CO2 + H2O. It carries out the reaction D-ribulose 1,5-bisphosphate + O2 = 2-phosphoglycolate + (2R)-3-phosphoglycerate + 2 H(+). In terms of biological role, ruBisCO catalyzes two reactions: the carboxylation of D-ribulose 1,5-bisphosphate, the primary event in carbon dioxide fixation, as well as the oxidative fragmentation of the pentose substrate in the photorespiration process. Both reactions occur simultaneously and in competition at the same active site. This is Ribulose bisphosphate carboxylase large chain from Nicotiana otophora (Tobacco).